We begin with the raw amino-acid sequence, 223 residues long: Small ribosomal subunit protein uS3 (223 aa).

Positions 39 to 107 (VREFLHKKLA…PVQINIEEVR (69 aa)) constitute a KH type-2 domain.

Belongs to the universal ribosomal protein uS3 family. As to quaternary structure, part of the 30S ribosomal subunit. Forms a tight complex with proteins S10 and S14.

Its function is as follows. Binds the lower part of the 30S subunit head. Binds mRNA in the 70S ribosome, positioning it for translation. The polypeptide is Small ribosomal subunit protein uS3 (Francisella tularensis subsp. holarctica (strain FTNF002-00 / FTA)).